We begin with the raw amino-acid sequence, 696 residues long: Elongation factor G (696 aa).

The 275-residue stretch at 8-282 (DRTRNIGIMA…AVIDYLPSPL (275 aa)) folds into the tr-type G domain. GTP contacts are provided by residues 17 to 24 (AHIDAGKT), 81 to 85 (DTPGH), and 135 to 138 (NKMD).

Belongs to the TRAFAC class translation factor GTPase superfamily. Classic translation factor GTPase family. EF-G/EF-2 subfamily.

It is found in the cytoplasm. Catalyzes the GTP-dependent ribosomal translocation step during translation elongation. During this step, the ribosome changes from the pre-translocational (PRE) to the post-translocational (POST) state as the newly formed A-site-bound peptidyl-tRNA and P-site-bound deacylated tRNA move to the P and E sites, respectively. Catalyzes the coordinated movement of the two tRNA molecules, the mRNA and conformational changes in the ribosome. The polypeptide is Elongation factor G (Staphylococcus saprophyticus subsp. saprophyticus (strain ATCC 15305 / DSM 20229 / NCIMB 8711 / NCTC 7292 / S-41)).